The primary structure comprises 310 residues: Beta-carotene 3-hydroxylase 1, chloroplastic (310 aa).

A chloroplast-targeting transit peptide spans 1-51 (MAAGLSTAVTFKPLHRSFSSSSTDFRLRLPKSLSGFSPSLRFKRFSVCYVV). Transmembrane regions (helical) follow at residues 98–118 (YLIAAMLSSFGITSMAVMAVY) and 132–152 (MLEMFGTFALSVGAAVGMEFW). The region spanning 145–272 (AAVGMEFWAR…KFNGVPYGLF (128 aa)) is the Fatty acid hydroxylase domain. The Histidine box-1 motif lies at 157–162 (HRALWH). Positions 169–173 (HESHH) match the Histidine box-2 motif. A run of 2 helical transmembrane segments spans residues 183–203 (NDVFAIVNAGPAIGLLSYGFF) and 208–228 (VPGLCFGAGLGITVFGIAYMF). The Histidine box-3 signature appears at 230-235 (HDGLVH). Positions 256–260 (HQLHH) match the Histidine box-4 motif.

Belongs to the sterol desaturase family. As to quaternary structure, homodimer. Expressed in leaves, flowers, stems, roots and siliques.

It localises to the plastid. It is found in the chloroplast membrane. The catalysed reaction is all-trans-beta-carotene + 4 reduced [2Fe-2S]-[ferredoxin] + 2 O2 + 4 H(+) = all-trans-zeaxanthin + 4 oxidized [2Fe-2S]-[ferredoxin] + 2 H2O. Functionally, nonheme diiron monooxygenase involved in the biosynthesis of xanthophylls. Specific for beta-ring hydroxylations of beta-carotene. Also has a low activity toward the beta- and epsilon-rings of alpha-carotene. No activity with acyclic carotenoids such as lycopene and neurosporene. Uses ferredoxin as an electron donor. The polypeptide is Beta-carotene 3-hydroxylase 1, chloroplastic (BETA-OHASE 1) (Arabidopsis thaliana (Mouse-ear cress)).